A 285-amino-acid chain; its full sequence is Complement C1q tumor necrosis factor-related protein 2 (285 aa).

An N-terminal signal peptide occupies residues 1–15 (MIPWVLLACALPCAA). The disordered stretch occupies residues 33–144 (QLVCSLPGPQ…PGLPGPCSCG (112 aa)). The Collagen-like domain maps to 40-141 (GPQGPPGPPG…KGEPGLPGPC (102 aa)). Over residues 41-51 (PQGPPGPPGAP) the composition is skewed to pro residues. Low complexity predominate over residues 53 to 65 (PSGMMGRMGFPGK). Basic and acidic residues predominate over residues 66 to 78 (DGQDGHDGDRGDS). A compositionally biased stretch (low complexity) spans 84-120 (PGRTGNRGKPGPKGKAGAIGRAGPRGPKGVNGTPGKH). The C1q domain occupies 145–281 (SGHTKSAFSV…GFLIYADQDD (137 aa)).

As to quaternary structure, may interact with ERFE. As to expression, expressed in adipose tissue.

It is found in the secreted. Its function is as follows. Involved in the regulation of lipid metabolism in adipose tissue and liver. The sequence is that of Complement C1q tumor necrosis factor-related protein 2 (C1QTNF2) from Homo sapiens (Human).